The primary structure comprises 309 residues: uncharacterized protein (309 aa).

Residues Met-1–Thr-16 are compositionally biased toward basic residues. The tract at residues Met-1–Val-70 is disordered. Positions 261, 281, and 290 each coordinate S-adenosyl-L-methionine.

It belongs to the class IV-like SAM-binding methyltransferase superfamily. RNA methyltransferase TrmH family.

This is an uncharacterized protein from Mycolicibacterium paratuberculosis (strain ATCC BAA-968 / K-10) (Mycobacterium paratuberculosis).